Consider the following 383-residue polypeptide: Chitinase-3-like protein 1 (383 aa).

The first 21 residues, 1–21 (MGLRVAQTGFVALVLLQSCAA), serve as a signal peptide directing secretion. The region spanning 22–383 (YKLVCYYTSW…SAIKDVLAAA (362 aa)) is the GH18 domain. A disulfide bond links Cys-26 and Cys-51. N-linked (GlcNAc...) asparagine glycosylation occurs at Asn-60. Chitin-binding positions include 70–71 (EW), 97–100 (GGWN), Tyr-141, 204–207 (LTYD), and Arg-263. Residues Cys-300 and Cys-364 are joined by a disulfide bond. An important for AKT1 activation and IL8 production region spans residues 324–338 (QWVGYDDQESVKNKA). Trp-352 contributes to the chitin binding site.

Belongs to the glycosyl hydrolase 18 family. In terms of assembly, monomer. As to expression, detected in smooth muscle cells in atherosclerotic plaques. Detected in regions of vascular occlusion in the aorta.

The protein resides in the secreted. It localises to the extracellular space. It is found in the cytoplasm. Its subcellular location is the perinuclear region. The protein localises to the endoplasmic reticulum. In terms of biological role, carbohydrate-binding lectin with a preference for chitin. Has no chitinase activity. May play a role in tissue remodeling and in the capacity of cells to respond to and cope with changes in their environment. Plays a role in T-helper cell type 2 (Th2) inflammatory response and IL-13-induced inflammation, regulating allergen sensitization, inflammatory cell apoptosis, dendritic cell accumulation and M2 macrophage differentiation. Facilitates invasion of pathogenic enteric bacteria into colonic mucosa and lymphoid organs. Mediates activation of AKT1 signaling pathway and subsequent IL8 production in colonic epithelial cells. Regulates antibacterial responses in lung by contributing to macrophage bacterial killing, controlling bacterial dissemination and augmenting host tolerance. Also regulates hyperoxia-induced injury, inflammation and epithelial apoptosis in lung. Stimulates migration and adhesion of cultured vascular smooth muscle cells. The protein is Chitinase-3-like protein 1 (CHI3L1) of Sus scrofa (Pig).